The chain runs to 376 residues: MSRENQVRQSLFDIERALRESPFWQVVPPEEEAFNSTEPFSLDTMKPEEWLQWVFLPRMHALLDSELALPRSWFYCLILKKRWKGRQKRPRRFCCVSSSSMSYSPPMYRMAQCTMLEIIYQDEHLVAVNKPSGWLVHRSWLDRKEKVVVMQTVRDQIGQHVYTVHRLDRPTSGVLLLALSSEVARALSQQFESHQMQKTYHAVVRGYVLDDGVIDYALTEELDKIADKFTNPDKAPQPAVTHYRSLAQAEMPVAIGRYPTARYSLMELKPQTGRKHQLRRHMSHIHHPIIGDTAHGDLRHNRGMESHFSCGRLMLHASELQLNHPVSGQPLTLQARWDAPWQGVVTQFGWKGILPEFEGVEFPADSGQDSEHFVEQ.

Residue aspartate 168 is part of the active site.

The protein in the C-terminal section; belongs to the pseudouridine synthase RluA family. This sequence to E.coli YqcC in the N-terminal section.

It catalyses the reaction uridine(65) in tRNA = pseudouridine(65) in tRNA. Functionally, responsible for synthesis of pseudouridine from uracil-65 in transfer RNAs. This is tRNA pseudouridine synthase C (truC) from Pectobacterium carotovorum subsp. carotovorum (Erwinia carotovora subsp. carotovora).